A 441-amino-acid polypeptide reads, in one-letter code: Xylose isomerase 1 (441 aa).

Catalysis depends on residues His-105 and Asp-108. Mg(2+)-binding residues include Glu-236, Glu-272, His-275, Asp-300, Asp-311, Asp-313, and Asp-343.

It belongs to the xylose isomerase family. Homotetramer. The cofactor is Mg(2+).

It localises to the cytoplasm. The enzyme catalyses alpha-D-xylose = alpha-D-xylulofuranose. The sequence is that of Xylose isomerase 1 (xylA1) from Xanthomonas axonopodis pv. citri (strain 306).